An 85-amino-acid chain; its full sequence is Small ribosomal subunit protein uS17 (85 aa).

It belongs to the universal ribosomal protein uS17 family. Part of the 30S ribosomal subunit.

In terms of biological role, one of the primary rRNA binding proteins, it binds specifically to the 5'-end of 16S ribosomal RNA. In Mycoplasmoides gallisepticum (strain R(low / passage 15 / clone 2)) (Mycoplasma gallisepticum), this protein is Small ribosomal subunit protein uS17.